Here is a 314-residue protein sequence, read N- to C-terminus: Mitochondrial translation factor 2 (314 aa).

Residues 111–136 (ENSSNIYDPSSPPDSPRKQQTHLGTI) form a disordered region.

As to quaternary structure, component of the MRH5C complex, composed of mrh5, ppr4, mtf2, and sls1. Proteins mtf2 and sls1 form a subcomplex that serves as a scaffold to bring mrh5 and ppr4 together. The MRH5C complex associates with the small subunit of the mitochondrial ribosome.

In terms of biological role, translation activation factor that as part of the MRH5C complex specifically recruits cox1 mRNA to the mitochondrial ribosome for translation initiation. The protein is Mitochondrial translation factor 2 of Schizosaccharomyces pombe (strain 972 / ATCC 24843) (Fission yeast).